The chain runs to 335 residues: Pro-cathepsin H (335 aa).

Positions 1–22 (MWATLPLLCAGAWLLGVPVCGA) are cleaved as a signal peptide. Positions 23 to 97 (AELCVNSLEK…AEIKHKYLWS (75 aa)) are cleaved as a propeptide — activation peptide. N-linked (GlcNAc...) asparagine glycosylation occurs at N101. 4 disulfides stabilise this stretch: C102/C327, C138/C181, C172/C214, and C272/C322. A propeptide spanning residues 106 to 115 (KSNYLRGTGP) is cleaved from the precursor. The active site involves C141. Residue N230 is glycosylated (N-linked (GlcNAc...) asparagine). Active-site residues include H281 and N301.

It belongs to the peptidase C1 family. As to quaternary structure, composed of a mini chain and a large chain. The large chain may be split into heavy and light chain. All chains are held together by disulfide bonds.

It is found in the lysosome. The enzyme catalyses Hydrolysis of proteins, acting as an aminopeptidase (notably, cleaving Arg-|-Xaa bonds) as well as an endopeptidase.. Important for the overall degradation of proteins in lysosomes. The polypeptide is Pro-cathepsin H (CTSH) (Homo sapiens (Human)).